The sequence spans 208 residues: Small ribosomal subunit protein uS3 (208 aa).

The KH type-2 domain maps to 16 to 85; the sequence is IDEYFKKELS…KPQIDVKPVE (70 aa).

It belongs to the universal ribosomal protein uS3 family. As to quaternary structure, part of the 30S ribosomal subunit.

Functionally, binds the lower part of the 30S subunit head. The protein is Small ribosomal subunit protein uS3 of Methanocaldococcus jannaschii (strain ATCC 43067 / DSM 2661 / JAL-1 / JCM 10045 / NBRC 100440) (Methanococcus jannaschii).